A 416-amino-acid chain; its full sequence is MAASMCDVFSFCVGVADRARGSVEVRYVDSIKGKGLFATQLIRKGETIFIERPLVAAQFLWNALYQYRACDHCLRALEKAEENAQRLTGKPSQILPHPELCSVRKDLHQNCPHCQVMYCSAECRLAAAEQYHQILCPGPSHDPRHPLNKLQEAWRSVHYPPETASIMLMARMVATVKQAKDKDHWVRLFNHFCSRTANQEQAIVHKLLKGKFKDQLELLLGLFKEALYEEALSLWFTPEGFRSLFALVGTNGQGIGTSSLSQWVHACDALELTPQDREQLDTFIDQLYKDIEAATGEFLNCEGSGLFVLQSCCNHSCVPNAETSFPENNFVLHVTALEDIKPGEEICISYLDCCQRERSRHSRHKILRENYLFNCSCPKCLAEADDPNVTSEEEEEEDEEEGEPEDAELGDEMTDV.

The region spanning 21–351 (GSVEVRYVDS…PGEEICISYL (331 aa)) is the SET domain. The MYND-type zinc-finger motif lies at 98–136 (PELCSVRKDLHQNCPHCQVMYCSAECRLAAAEQYHQILC). Tyrosine 350 serves as a coordination point for S-adenosyl-L-methionine. Positions 383–416 (EADDPNVTSEEEEEEDEEEGEPEDAELGDEMTDV) are disordered.

Belongs to the class V-like SAM-binding methyltransferase superfamily. Interacts with the N-CoR complex. Interacts with EHMT2 and CBX5. Ubiquitinated and degradaed by the proteasome in response to mild hypothermia (32 degrees Celsius), relieving repression of the SP1 gene.

It is found in the cytoplasm. It carries out the reaction L-lysyl-[protein] + 3 S-adenosyl-L-methionine = N(6),N(6),N(6)-trimethyl-L-lysyl-[protein] + 3 S-adenosyl-L-homocysteine + 3 H(+). The catalysed reaction is L-lysyl(20)-[histone H4] + 3 S-adenosyl-L-methionine = N(6),N(6),N(6)-trimethyl-L-lysyl(20)-[histone H4] + 3 S-adenosyl-L-homocysteine + 3 H(+). The enzyme catalyses L-lysyl(36)-[histone H3] + 3 S-adenosyl-L-methionine = N(6),N(6),N(6)-trimethyl-L-lysyl(36)-[histone H3] + 3 S-adenosyl-L-homocysteine + 3 H(+). Its function is as follows. Protein-lysine N-trimethyltransferase that specifically catalyzes trimethylation of 'Lys-22' of the RPL40/eL40 subunit of the 60S ribosome, thereby promoting translation elongation and protein synthesis. May also act as a histone methyltransferase in the context of histone octamers, but not on nucleosome substrates: trimethylates 'Lys-36' of histone H3 and 'Lys-20' of histone H4 to form H3K36me3 and H4K20me3, respectively. The histone methyltransferase activity, which is independent of its SET domain, is however unsure in vivo. In association with the NCoR corepressor complex, involved in the repression of toll-like receptor 4 (TLR4)-target inflammatory genes in macrophages, possibly by catalyzing the formation of H4K20me3 at the gene promoters. Plays an important role in embryonic stem (ES) cell self-renewal and differentiation. Maintains genome stability of ES cells during differentiation through regulation of heterochromatin formation and repression of endogenous repetitive DNA elements by promoting H4K20me3 marks. Acts as a regulator of the hypothermia response: its degradation in response to mild hypothermia relieves the formation of H3K36me3 at gene promoters, allowing expression of the neuroprotective gene SP1. This chain is Protein-lysine N-trimethyltransferase SMYD5, found in Mus musculus (Mouse).